The following is a 372-amino-acid chain: DNA polymerase delta subunit 3 (372 aa).

Disordered stretches follow at residues Lys-156–Ser-264 and Lys-352–Lys-372. Polar residues predominate over residues Ser-160–Ser-173. At Ser-163 the chain carries Phosphoserine. Composition is skewed to basic and acidic residues over residues Thr-174 to Asp-190 and Ala-209 to Lys-239. The span at Thr-355–Ile-365 shows a compositional bias: polar residues.

Heterotetramer that consist of the pol3, cdc1, cdc27 and cdm1 subunits. Cdc27 interacts with cdc1 and is required for dimerization of the tetramer.

Its subcellular location is the nucleus. The chain is DNA polymerase delta subunit 3 (cdc27) from Schizosaccharomyces pombe (strain 972 / ATCC 24843) (Fission yeast).